Here is a 589-residue protein sequence, read N- to C-terminus: Ubiquilin-1 (589 aa).

The segment covering 1-11 (MAESGESGGPP) has biased composition (gly residues). Disordered regions lie at residues 1 to 35 (MAES…AEPK) and 110 to 145 (NRPQ…ATSN). Position 2 is an N-acetylalanine (Ala2). The segment covering 12–35 (GSQDSAAGAEGAGAPAAAASAEPK) has biased composition (low complexity). The Ubiquitin-like domain occupies 37-111 (MKVTVKTPKE…VHLVIKTQNR (75 aa)). Over residues 110–124 (NRPQDHSAQQTNTAG) the composition is skewed to polar residues. Low complexity predominate over residues 125–145 (SNVTTSSTPNSNSTSGSATSN). The tract at residues 178–428 (QLLSNPEMMV…LNNPLFAGNP (251 aa)) is interaction with UBXN4. 2 STI1 domains span residues 182–210 (NPEM…QLIM) and 212–251 (NPQM…MQEM). The interval 295–371 (PFASLVSNTS…NLVPGVGASM (77 aa)) is disordered. Positions 299-313 (LVSNTSSGEGSQPSR) are enriched in polar residues. Low complexity predominate over residues 327–360 (QTSQSSSASSGTASTVGGTTGSTASGTSGQSTTA). STI1 domains are found at residues 387 to 434 (NPQL…QEQM) and 438 to 470 (LPTF…QQGL). A disordered region spans residues 488 to 520 (LGALGSTGGSSGTNGSNATPSENTSPTAGTTEP). A compositionally biased stretch (gly residues) spans 489–499 (GALGSTGGSSG). A compositionally biased stretch (polar residues) spans 509-520 (ENTSPTAGTTEP). The 41-residue stretch at 546-586 (RFQQQLEQPSAMGFLNREANLQALIATGGDINAAIERLLGS) folds into the UBA domain.

As to quaternary structure, monomer and homodimer. Heterodimer with UBQLN2. Binds CD47, NBL1, GABRA1, GABRA2, GABRA3, GABRA6, GABRB1, GABRB2 and GABRB3. Binds UBE3A, BTRC, P4HB and MTOR. Interacts with the proteasome 19S subunit. Interacts (via ubiquitin-like domain) with TREX1; the interaction is direct and may control TREX1 subcellular location. Forms a complex with UBXN4 and VCP. Interacts (via UBA domain) with UBQLN4 (via ubiquitin-like domain). Found in a complex with UBQLN2 and MAP1LC3A/B/C. The monomeric form interacts with PSEN1 and PSEN2. Interacts with ORAI1. Interacts (via UBA domain) with TICAM1. Interacts with EPS15. Interacts (via UBA domain) with UBA52 and (via ubiquitin-like domain) with PSMD3 and PSMD4. Interacts with HERPUD1. Interacts with MAP1LC3A/B/C in the presence of UBQLN4. Interacts (via ubiquitin-like domain) with EPS15 (via UIM domains) and both the ubiquitinated and non-ubiquitinated forms can interact with EPS15. Interacts (via ubiquitin-like domain) with EPS15L1, HGS (via UIM domain) and STAM2 (via UIM domain). Interacts with BCL2L10/BCL-B; in the cytoplasm. Degraded during both macroautophagy and during chaperone-mediated autophagy (CMA). Post-translationally, phosphorylated. In terms of processing, ubiquitinated.

The protein resides in the nucleus. The protein localises to the cytoplasm. It localises to the endoplasmic reticulum. Its subcellular location is the cytoplasmic vesicle. It is found in the autophagosome. The protein resides in the cell membrane. Functionally, plays an important role in the regulation of different protein degradation mechanisms and pathways including ubiquitin-proteasome system (UPS), autophagy and endoplasmic reticulum-associated protein degradation (ERAD) pathway. Mediates the proteasomal targeting of misfolded or accumulated proteins for degradation by binding (via UBA domain) to their polyubiquitin chains and by interacting (via ubiquitin-like domain) with the subunits of the proteasome. Plays a role in the ERAD pathway via its interaction with ER-localized proteins UBXN4, VCP and HERPUD1 and may form a link between the polyubiquitinated ERAD substrates and the proteasome. Plays a role in unfolded protein response (UPR) by attenuating the induction of UPR-inducible genes, DDTI3/CHOP, HSPA5 and PDIA2 during ER stress. Involved in the regulation of macroautophagy and autophagosome formation; required for maturation of autophagy-related protein LC3 from the cytosolic form LC3-I to the membrane-bound form LC3-II and may assist in the maturation of autophagosomes to autolysosomes by mediating autophagosome-lysosome fusion. Negatively regulates the TICAM1/TRIF-dependent toll-like receptor signaling pathway by decreasing the abundance of TICAM1 via the autophagic pathway. Promotes the ubiquitination and lysosomal degradation of ORAI1, consequently down-regulating the ORAI1-mediated Ca2+ mobilization. Suppresses the maturation and proteasomal degradation of amyloid beta A4 protein (A4) by stimulating the lysine 63 (K63)-linked polyubiquitination. Delays the maturation of A4 by sequestering it in the Golgi apparatus and preventing its transport to the cell surface for subsequent processing. Ubiquitinates BCL2L10 and thereby stabilizes protein abundance. This is Ubiquilin-1 (UBQLN1) from Pongo abelii (Sumatran orangutan).